Reading from the N-terminus, the 101-residue chain is Thrombin-like enzyme okinaxobin-1 (101 aa).

The first 16 residues, 1 to 16, serve as a signal peptide directing secretion; the sequence is LIRVLANLLILQLSYA. Residues 17-22 constitute a propeptide that is removed on maturation; sequence QKSSEL. One can recognise a Peptidase S1 domain in the interval 23-101; that stretch reads VIGGDECNIN…PKKKYFFRCR (79 aa). The cysteines at positions 50 and 66 are disulfide-linked. The Charge relay system role is filled by H65.

This sequence belongs to the peptidase S1 family. Snake venom subfamily. Monomer. Glycosylated. Expressed by the venom gland.

The protein localises to the secreted. With respect to regulation, strongly inactivated by diisopropylfluorophosphate (DFP) and phenylmethanesulfonyl fluoride (PMSF), and to a lesser extent by tosyl-L-lysine chloromethyl ketone (TLCK). Functionally, thrombin-like snake venom serine protease that releases specifically fibrinopeptide B from fibrinogen (FGB) to form fibrin clots. Shows a preferential cleavage at Arg-|-Gly bonds in fibrinogen beta chains. Cleaves fibrinogen beta chains preferentially to alpha chains. This chain is Thrombin-like enzyme okinaxobin-1, found in Ovophis okinavensis (Ryukyu Island pit viper).